We begin with the raw amino-acid sequence, 102 residues long: Small ribosomal subunit protein uS10m (102 aa).

It belongs to the universal ribosomal protein uS10 family.

It localises to the mitochondrion. This is Small ribosomal subunit protein uS10m (RPS10) from Marchantia polymorpha (Common liverwort).